Consider the following 619-residue polypeptide: Cationic amino acid transporter 3 (619 aa).

At 1–36 (MLWQALRRFGQKLVRRRLLELGMGETRLARCLSTLD) the chain is on the cytoplasmic side. A helical membrane pass occupies residues 37–57 (LVALGVGSTLGAGVYVLAGEV). The Extracellular segment spans residues 58 to 61 (AKEK). A helical membrane pass occupies residues 62–82 (AGPSIVICFLVAALSSVLAGL). At 83 to 107 (CYAEFGARVPGSGSAYLYSYVTVGE) the chain is on the cytoplasmic side. The helical transmembrane segment at 108–128 (LWAFTTGWNLILSYVIGTASV) threads the bilayer. Topologically, residues 129 to 162 (ARAWSSAFDNLIGNHISQTLKGTILLNMPHVLAE) are extracellular. The helical transmembrane segment at 163–183 (YPDFFALALVLLLTGLLVLGA) threads the bilayer. Residues 184 to 191 (NESGLVTK) are Cytoplasmic-facing. A helical transmembrane segment spans residues 192–212 (VFTGMNLLVLGFVIISGFIKG). The Extracellular segment spans residues 213-244 (ELRNWKLTKEDYCLTMSESNGTCSLDSMGSGG). The N-linked (GlcNAc...) asparagine glycan is linked to asparagine 232. A helical transmembrane segment spans residues 245–265 (FMPFGLEGILRGAATCFYAFV). Residues 266-285 (GFDCIATTGEEAQNPQRSIP) lie on the Cytoplasmic side of the membrane. A helical membrane pass occupies residues 286–306 (MGIVISLSICFLAYFGVSSAL). The Extracellular segment spans residues 307-335 (TLMMPYYKLQPESPLPEAFTYVGWEPARY). Residues 336–356 (LVAIGSLCALSTSLLGSMFPM) traverse the membrane as a helical segment. Topologically, residues 357–382 (PRVIYAMAEDGLLFRVLARVHNGTHT) are cytoplasmic. The helical transmembrane segment at 383-403 (PIVATVVSGVIAAFMAFLFEL) threads the bilayer. The Extracellular portion of the chain corresponds to 404 to 406 (TDL). The helical transmembrane segment at 407-427 (VDLMSIGTLLAYSLVSICVLI) threads the bilayer. The Cytoplasmic portion of the chain corresponds to 428-475 (LRYQPDQEMKNGEEEVELQEERTLEAEKLTVQALFCQVDSIPTLLSGR). Residues 476-496 (IVYVCSSLLAVLLTVLCLVLT) traverse the membrane as a helical segment. The Extracellular portion of the chain corresponds to 497-507 (WWTTPLHSGDP). Residues 508 to 528 (VWVTVVVLILGLILGISGVIW) form a helical membrane-spanning segment. The Cytoplasmic portion of the chain corresponds to 529 to 540 (RQPQNRTPLHFK). Residues 541–561 (VPVVPLLPLVSIFVNVYLMMQ) traverse the membrane as a helical segment. The Extracellular segment spans residues 562 to 569 (MTADTWAR). Residues 570–590 (FGVWMLIGFAIYFGYGIQHSV) traverse the membrane as a helical segment. The Cytoplasmic segment spans residues 591–619 (EEVKNHQTLPKTRPQTIDLDLTTSCVHSI). Phosphothreonine is present on threonine 606. Serine 618 is subject to Phosphoserine.

Belongs to the amino acid-polyamine-organocation (APC) superfamily. Cationic amino acid transporter (CAT) (TC 2.A.3.3) family. N-glycosylated. As to expression, highly expressed in brain.

The protein localises to the cell membrane. The catalysed reaction is L-arginine(in) = L-arginine(out). It carries out the reaction L-lysine(in) = L-lysine(out). It catalyses the reaction L-ornithine(in) = L-ornithine(out). With respect to regulation, inhibited by high potassium ions-induced membrane depolarization. Functionally, uniporter that mediates the uptake of cationic L-amino acids such as L-arginine, L-lysine and L-ornithine. The transport is sodium ions- and pH-independent, moderately trans-stimulated and is mediated by passive diffusion. The protein is Cationic amino acid transporter 3 of Rattus norvegicus (Rat).